A 427-amino-acid polypeptide reads, in one-letter code: MLVKADMTKDIAQVMAEVGRKAKAAAAPLSIATSEQKNKALNAAADAILEARADILEANRLDLANAEKNGMAASFVDRLTLNEARIDAIAEDIRAIATLPDPVGEVIAEWDRPNGLHIERVRTPLGVIGVIYESRPNVTADAGALCLKAGNAVILRGGSDSAHSSAAIHKALVKGLEAANLPADAIQIVPVTDRAAVGEMLKGLGGAIDVIVPRGGKSLVARVQSEARVPVFAHLEGICHLYIDKSADLDMARRIALDAKMRRTGICGAAETLLVDRAVASTHLAPILGDLAAGGCEIRGSAEVLALYPAAKPATEEDWSTEYLDAIISVALVDGISGAIDHINRYSSHHTEAIVAEDAQTVARFFNEIDSAILLHNASTQFADGGEFGMGAEIGIATGKMHARGPVGVEQLTSFKYRVRGSGQVRG.

Belongs to the gamma-glutamyl phosphate reductase family.

It localises to the cytoplasm. It catalyses the reaction L-glutamate 5-semialdehyde + phosphate + NADP(+) = L-glutamyl 5-phosphate + NADPH + H(+). Its pathway is amino-acid biosynthesis; L-proline biosynthesis; L-glutamate 5-semialdehyde from L-glutamate: step 2/2. In terms of biological role, catalyzes the NADPH-dependent reduction of L-glutamate 5-phosphate into L-glutamate 5-semialdehyde and phosphate. The product spontaneously undergoes cyclization to form 1-pyrroline-5-carboxylate. The sequence is that of Gamma-glutamyl phosphate reductase from Brucella canis (strain ATCC 23365 / NCTC 10854 / RM-666).